Consider the following 393-residue polypeptide: Riboflavin biosynthesis protein RibBA (393 aa).

The DHBP synthase stretch occupies residues 1 to 200 (MQFDNIDSAL…IDDLIEYRKK (200 aa)). D-ribulose 5-phosphate contacts are provided by residues 27-28 (RE), Asp32, 139-143 (RNGHT), and Glu163. Residue Glu28 coordinates Mg(2+). Residue His142 coordinates Mg(2+). The interval 201–393 (LEPEIEFKAK…TKKIKMGHLI (193 aa)) is GTP cyclohydrolase II. 249–253 (RLHSA) lines the GTP pocket. Residues Cys254, Cys265, and Cys267 each coordinate Zn(2+). GTP contacts are provided by residues Gln270, 291 to 293 (EGR), and Thr313. Residue Asp325 is the Proton acceptor; for GTP cyclohydrolase activity of the active site. Residue Arg327 is the Nucleophile; for GTP cyclohydrolase activity of the active site. GTP contacts are provided by Ser348 and Lys353.

The protein in the N-terminal section; belongs to the DHBP synthase family. This sequence in the C-terminal section; belongs to the GTP cyclohydrolase II family. Mg(2+) is required as a cofactor. The cofactor is Mn(2+). Requires Zn(2+) as cofactor.

It catalyses the reaction D-ribulose 5-phosphate = (2S)-2-hydroxy-3-oxobutyl phosphate + formate + H(+). The enzyme catalyses GTP + 4 H2O = 2,5-diamino-6-hydroxy-4-(5-phosphoribosylamino)-pyrimidine + formate + 2 phosphate + 3 H(+). It participates in cofactor biosynthesis; riboflavin biosynthesis; 2-hydroxy-3-oxobutyl phosphate from D-ribulose 5-phosphate: step 1/1. It functions in the pathway cofactor biosynthesis; riboflavin biosynthesis; 5-amino-6-(D-ribitylamino)uracil from GTP: step 1/4. Functionally, catalyzes the conversion of D-ribulose 5-phosphate to formate and 3,4-dihydroxy-2-butanone 4-phosphate. Catalyzes the conversion of GTP to 2,5-diamino-6-ribosylamino-4(3H)-pyrimidinone 5'-phosphate (DARP), formate and pyrophosphate. The chain is Riboflavin biosynthesis protein RibBA from Staphylococcus aureus (strain Mu50 / ATCC 700699).